The primary structure comprises 219 residues: Thiamine-phosphate synthase (219 aa).

Residues 48–52 and N80 each bind 4-amino-2-methyl-5-(diphosphooxymethyl)pyrimidine; that span reads QLREK. Mg(2+) is bound by residues D81 and D100. S119 contributes to the 4-amino-2-methyl-5-(diphosphooxymethyl)pyrimidine binding site. 145–147 contacts 2-[(2R,5Z)-2-carboxy-4-methylthiazol-5(2H)-ylidene]ethyl phosphate; the sequence is TPT. K148 lines the 4-amino-2-methyl-5-(diphosphooxymethyl)pyrimidine pocket. Residues G176 and 196–197 contribute to the 2-[(2R,5Z)-2-carboxy-4-methylthiazol-5(2H)-ylidene]ethyl phosphate site; that span reads VS.

The protein belongs to the thiamine-phosphate synthase family. The cofactor is Mg(2+).

The catalysed reaction is 2-[(2R,5Z)-2-carboxy-4-methylthiazol-5(2H)-ylidene]ethyl phosphate + 4-amino-2-methyl-5-(diphosphooxymethyl)pyrimidine + 2 H(+) = thiamine phosphate + CO2 + diphosphate. It catalyses the reaction 2-(2-carboxy-4-methylthiazol-5-yl)ethyl phosphate + 4-amino-2-methyl-5-(diphosphooxymethyl)pyrimidine + 2 H(+) = thiamine phosphate + CO2 + diphosphate. The enzyme catalyses 4-methyl-5-(2-phosphooxyethyl)-thiazole + 4-amino-2-methyl-5-(diphosphooxymethyl)pyrimidine + H(+) = thiamine phosphate + diphosphate. It functions in the pathway cofactor biosynthesis; thiamine diphosphate biosynthesis; thiamine phosphate from 4-amino-2-methyl-5-diphosphomethylpyrimidine and 4-methyl-5-(2-phosphoethyl)-thiazole: step 1/1. Its function is as follows. Condenses 4-methyl-5-(beta-hydroxyethyl)thiazole monophosphate (THZ-P) and 2-methyl-4-amino-5-hydroxymethyl pyrimidine pyrophosphate (HMP-PP) to form thiamine monophosphate (TMP). This chain is Thiamine-phosphate synthase, found in Albidiferax ferrireducens (strain ATCC BAA-621 / DSM 15236 / T118) (Rhodoferax ferrireducens).